The sequence spans 116 residues: Ig heavy chain V-A1 region BS-5 (116 aa).

Gln1 bears the Pyrrolidone carboxylic acid mark. The region spanning 1–107 (QSVEESGGRL…LVHLAFVDVW (107 aa)) is the Ig-like domain.

The protein is Ig heavy chain V-A1 region BS-5 of Oryctolagus cuniculus (Rabbit).